The following is a 726-amino-acid chain: Catalase-peroxidase (726 aa).

The segment at residues 90–213 is a cross-link (tryptophyl-tyrosyl-methioninium (Trp-Tyr) (with M-239)); it reads WHAAGTYRIG…LAAVQMGLIY (124 aa). The Proton acceptor role is filled by His91. The segment at residues 213–239 is a cross-link (tryptophyl-tyrosyl-methioninium (Tyr-Met) (with W-90)); sequence YVNPEGPNGKPDPAAAARDIRETFARM. His254 provides a ligand contact to heme b. Positions 338 to 359 are disordered; that stretch reads TPKGGAGAGTVPDAHDPSKRHA.

Belongs to the peroxidase family. Peroxidase/catalase subfamily. Homodimer or homotetramer. It depends on heme b as a cofactor. Formation of the three residue Trp-Tyr-Met cross-link is important for the catalase, but not the peroxidase activity of the enzyme.

The enzyme catalyses H2O2 + AH2 = A + 2 H2O. It carries out the reaction 2 H2O2 = O2 + 2 H2O. Bifunctional enzyme with both catalase and broad-spectrum peroxidase activity. The polypeptide is Catalase-peroxidase (Bradyrhizobium sp. (strain ORS 278)).